We begin with the raw amino-acid sequence, 332 residues long: Glycerol-3-phosphate dehydrogenase [NAD(P)+] (332 aa).

NADPH is bound by residues Ser11, Trp12, Arg32, Arg33, and Lys106. Positions 106 and 136 each coordinate sn-glycerol 3-phosphate. Residue Ala140 coordinates NADPH. The sn-glycerol 3-phosphate site is built by Lys191, Asp244, Ser254, Arg255, and Asn256. Lys191 serves as the catalytic Proton acceptor. Arg255 is an NADPH binding site. Residues Val280 and Glu282 each coordinate NADPH.

It belongs to the NAD-dependent glycerol-3-phosphate dehydrogenase family.

The protein localises to the cytoplasm. It catalyses the reaction sn-glycerol 3-phosphate + NAD(+) = dihydroxyacetone phosphate + NADH + H(+). The enzyme catalyses sn-glycerol 3-phosphate + NADP(+) = dihydroxyacetone phosphate + NADPH + H(+). It participates in membrane lipid metabolism; glycerophospholipid metabolism. Catalyzes the reduction of the glycolytic intermediate dihydroxyacetone phosphate (DHAP) to sn-glycerol 3-phosphate (G3P), the key precursor for phospholipid synthesis. This is Glycerol-3-phosphate dehydrogenase [NAD(P)+] from Corynebacterium jeikeium (strain K411).